A 64-amino-acid polypeptide reads, in one-letter code: Large ribosomal subunit protein bL28 (64 aa).

The protein belongs to the bacterial ribosomal protein bL28 family.

In Mycobacterium leprae (strain TN), this protein is Large ribosomal subunit protein bL28 (rpmB).